Consider the following 199-residue polypeptide: MAP6 domain-containing protein 1 (199 aa).

Residues Cys-5, Cys-10, and Cys-11 are each lipidated (S-palmitoyl cysteine). The disordered stretch occupies residues 33–110; the sequence is YSDLDSEEPG…SAQSSAPPAP (78 aa). At Ser-38 the chain carries Phosphoserine. 2 mn regions span residues 130–143 and 165–177; these read TTSYRQEFQAWTGV and DSSPGAGFQVPEV. Phosphoserine is present on Ser-167.

This sequence belongs to the STOP family. As to quaternary structure, interacts with calmodulin. Post-translationally, palmitoylated. Palmitoylation enhances association with microtubules.

The protein localises to the golgi apparatus. The protein resides in the cytoplasm. It localises to the cytoskeleton. May have microtubule-stabilizing activity. This Homo sapiens (Human) protein is MAP6 domain-containing protein 1 (MAP6D1).